The following is a 411-amino-acid chain: Peptidase T (411 aa).

Zn(2+) is bound at residue His-78. Asp-80 is an active-site residue. Asp-140 is a binding site for Zn(2+). Glu-173 functions as the Proton acceptor in the catalytic mechanism. Zn(2+) is bound by residues Glu-174, Asp-196, and His-379.

This sequence belongs to the peptidase M20B family. The cofactor is Zn(2+).

It localises to the cytoplasm. The catalysed reaction is Release of the N-terminal residue from a tripeptide.. In terms of biological role, cleaves the N-terminal amino acid of tripeptides. This is Peptidase T from Yersinia pseudotuberculosis serotype O:1b (strain IP 31758).